Reading from the N-terminus, the 162-residue chain is NADH-quinone oxidoreductase subunit C (162 aa).

The protein belongs to the complex I 30 kDa subunit family. In terms of assembly, NDH-1 is composed of 14 different subunits. Subunits NuoB, C, D, E, F, and G constitute the peripheral sector of the complex.

It localises to the cell inner membrane. It catalyses the reaction a quinone + NADH + 5 H(+)(in) = a quinol + NAD(+) + 4 H(+)(out). Its function is as follows. NDH-1 shuttles electrons from NADH, via FMN and iron-sulfur (Fe-S) centers, to quinones in the respiratory chain. The immediate electron acceptor for the enzyme in this species is believed to be ubiquinone. Couples the redox reaction to proton translocation (for every two electrons transferred, four hydrogen ions are translocated across the cytoplasmic membrane), and thus conserves the redox energy in a proton gradient. The chain is NADH-quinone oxidoreductase subunit C from Trichlorobacter lovleyi (strain ATCC BAA-1151 / DSM 17278 / SZ) (Geobacter lovleyi).